The chain runs to 472 residues: Glutamate--tRNA ligase 2 (472 aa).

Residues 12–22 (PSPSGLLHLGN) carry the 'HIGH' region motif. The 'KMSKS' region motif lies at 253-257 (PLSKR). Lys256 is a binding site for ATP.

Belongs to the class-I aminoacyl-tRNA synthetase family. Glutamate--tRNA ligase type 1 subfamily. As to quaternary structure, monomer.

The protein resides in the cytoplasm. It carries out the reaction tRNA(Glu) + L-glutamate + ATP = L-glutamyl-tRNA(Glu) + AMP + diphosphate. Catalyzes the attachment of glutamate to tRNA(Glu) in a two-step reaction: glutamate is first activated by ATP to form Glu-AMP and then transferred to the acceptor end of tRNA(Glu). The polypeptide is Glutamate--tRNA ligase 2 (Nitrosococcus oceani (strain ATCC 19707 / BCRC 17464 / JCM 30415 / NCIMB 11848 / C-107)).